We begin with the raw amino-acid sequence, 1202 residues long: DNA polymerase beta (1202 aa).

3 repeat units span residues Ala-1071–Pro-1074, Ala-1075–Pro-1078, and Ala-1079–Ala-1082. The interval Ala-1071–Ala-1082 is 3 X 4 AA tandem repeats of A-G-[NK]-[PA].

Belongs to the DNA polymerase type-B family.

The enzyme catalyses DNA(n) + a 2'-deoxyribonucleoside 5'-triphosphate = DNA(n+1) + diphosphate. In terms of biological role, DNA-directed DNA polymerase involved in viral DNA replication. This is DNA polymerase beta (DPOL) from Ornithodoros (relapsing fever ticks).